Consider the following 520-residue polypeptide: Bifunctional dihydrofolate reductase-thymidylate synthase (520 aa).

Positions 26-229 (AFSIVVALDM…LEFEICKYVP (204 aa)) constitute a DHFR domain. Residue Val-30 participates in substrate binding. NADP(+) is bound by residues Ala-32 and 38–44 (GIGDGES). A substrate-binding site is contributed by Asp-52. Residues 81 to 83 (RKT), 102 to 105 (LSSK), and 157 to 164 (GGAQVYAD) each bind NADP(+). Substrate-binding residues include Tyr-162 and Thr-180. The tract at residues 234–520 (ERQYLELIDR…HPAIKMEMAV (287 aa)) is thymidylate synthase. Arg-254 is a dUMP binding site. Residue Cys-400 is part of the active site. DUMP is bound by residues His-401, 421–425 (QRSCD), Asn-433, and 463–465 (HVY).

In the N-terminal section; belongs to the dihydrofolate reductase family. This sequence in the C-terminal section; belongs to the thymidylate synthase family.

It carries out the reaction (6S)-5,6,7,8-tetrahydrofolate + NADP(+) = 7,8-dihydrofolate + NADPH + H(+). It catalyses the reaction dUMP + (6R)-5,10-methylene-5,6,7,8-tetrahydrofolate = 7,8-dihydrofolate + dTMP. It functions in the pathway cofactor biosynthesis; tetrahydrofolate biosynthesis; 5,6,7,8-tetrahydrofolate from 7,8-dihydrofolate: step 1/1. Bifunctional enzyme. Involved in de novo dTMP biosynthesis. Key enzyme in folate metabolism. Catalyzes an essential reaction for de novo glycine and purine synthesis, DNA precursor synthesis, and for the conversion of dUMP to dTMP. The polypeptide is Bifunctional dihydrofolate reductase-thymidylate synthase (Leishmania major).